The primary structure comprises 214 residues: Outer-membrane lipoprotein LolB (214 aa).

Positions Met1–Gly25 are cleaved as a signal peptide. Cys26 carries N-palmitoyl cysteine lipidation. Residue Cys26 is the site of S-diacylglycerol cysteine attachment.

It belongs to the LolB family. Monomer.

Its subcellular location is the cell outer membrane. In terms of biological role, plays a critical role in the incorporation of lipoproteins in the outer membrane after they are released by the LolA protein. This is Outer-membrane lipoprotein LolB from Shewanella sp. (strain MR-4).